The following is a 238-amino-acid chain: Uridylate kinase (238 aa).

Lysine 10–glycine 13 is an ATP binding site. The interval glycine 18–glycine 23 is involved in allosteric activation by GTP. Residue glycine 52 coordinates UMP. ATP is bound by residues glycine 53 and arginine 57. Residues aspartate 73 and threonine 134–threonine 141 contribute to the UMP site. The ATP site is built by threonine 161, tyrosine 167, and aspartate 170.

It belongs to the UMP kinase family. Homohexamer.

It is found in the cytoplasm. The enzyme catalyses UMP + ATP = UDP + ADP. The protein operates within pyrimidine metabolism; CTP biosynthesis via de novo pathway; UDP from UMP (UMPK route): step 1/1. With respect to regulation, allosterically activated by GTP. Inhibited by UTP. Its function is as follows. Catalyzes the reversible phosphorylation of UMP to UDP. The chain is Uridylate kinase from Campylobacter concisus (strain 13826).